We begin with the raw amino-acid sequence, 445 residues long: Tubulin beta chain (445 aa).

Residues glutamine 11, glutamate 69, serine 138, glycine 142, threonine 143, glycine 144, asparagine 204, and asparagine 226 each coordinate GTP. Residue glutamate 69 participates in Mg(2+) binding.

It belongs to the tubulin family. Dimer of alpha and beta chains. A typical microtubule is a hollow water-filled tube with an outer diameter of 25 nm and an inner diameter of 15 nM. Alpha-beta heterodimers associate head-to-tail to form protofilaments running lengthwise along the microtubule wall with the beta-tubulin subunit facing the microtubule plus end conferring a structural polarity. Microtubules usually have 13 protofilaments but different protofilament numbers can be found in some organisms and specialized cells. Mg(2+) is required as a cofactor.

The protein resides in the cytoplasm. It localises to the cytoskeleton. Tubulin is the major constituent of microtubules, a cylinder consisting of laterally associated linear protofilaments composed of alpha- and beta-tubulin heterodimers. Microtubules grow by the addition of GTP-tubulin dimers to the microtubule end, where a stabilizing cap forms. Below the cap, tubulin dimers are in GDP-bound state, owing to GTPase activity of alpha-tubulin. The protein is Tubulin beta chain of Leishmania mexicana.